The following is a 62-amino-acid chain: Protein sigN176 (62 aa).

The protein is Protein sigN176 of Dictyostelium discoideum (Social amoeba).